Here is a 179-residue protein sequence, read N- to C-terminus: MTTVKPTSPENPRVFFDITIGGVEAGKVVMELYANTVPKTAENFRALCTGEKGIGKSGKPLSYKGSSFHRVITNFMCQGGDFTMGNGTGGESIYGNKFADENFKLKHFGQGTLSMANAGANTNGSQFFICVAPTDWLDGKHVVFGFVTEGMDVVKKMEAAGSQSGKTTKPVVIANCGQL.

A PPIase cyclophilin-type domain is found at 15–178; that stretch reads FFDITIGGVE…KPVVIANCGQ (164 aa).

This sequence belongs to the cyclophilin-type PPIase family.

It localises to the cytoplasm. It is found in the cytosol. It carries out the reaction [protein]-peptidylproline (omega=180) = [protein]-peptidylproline (omega=0). Binds cyclosporin A (CsA). CsA mediates some of its effects via an inhibitory action on PPIase. In terms of biological role, PPIase that catalyzes the cis-trans isomerization of proline imidic peptide bonds in oligopeptides and may therefore assist protein folding. This Dictyostelium discoideum (Social amoeba) protein is Peptidyl-prolyl cis-trans isomerase A (ppiA).